A 463-amino-acid polypeptide reads, in one-letter code: Dipeptidyl peptidase 1 (463 aa).

A signal peptide spans 1-24; sequence MGPWSGSRLVALLLLVYGAGSVRG. Asn-29 and Asn-53 each carry an N-linked (GlcNAc...) asparagine glycan. 2 cysteine pairs are disulfide-bonded: Cys-30–Cys-118 and Cys-54–Cys-136. Residues 135-230 constitute a propeptide that is removed on maturation; it reads ACFTGRKTGN…TAEIQKKILH (96 aa). The N-linked (GlcNAc...) asparagine glycan is linked to Asn-144. Disulfide bonds link Cys-255–Cys-298, Cys-291–Cys-331, and Cys-321–Cys-337. Cys-258 is a catalytic residue. N-linked (GlcNAc...) asparagine glycosylation is present at Asn-276. The chloride site is built by Phe-302 and Tyr-304. Tyr-347 contributes to the chloride binding site. Active-site residues include His-405 and Asn-427.

It belongs to the peptidase C1 family. In terms of assembly, tetramer of heterotrimers consisting of exclusion domain, heavy- and light chains. Chloride is required as a cofactor.

Its subcellular location is the lysosome. The catalysed reaction is Release of an N-terminal dipeptide, Xaa-Yaa-|-Zaa-, except when Xaa is Arg or Lys, or Yaa or Zaa is Pro.. Thiol protease. Has dipeptidylpeptidase activity. Active against a broad range of dipeptide substrates composed of both polar and hydrophobic amino acids. Proline cannot occupy the P1 position and arginine cannot occupy the P2 position of the substrate. Can act as both an exopeptidase and endopeptidase. Activates serine proteases such as elastase, cathepsin G and granzymes A and B. The protein is Dipeptidyl peptidase 1 (CTSC) of Bos taurus (Bovine).